A 140-amino-acid polypeptide reads, in one-letter code: Protein NrdI (140 aa).

It belongs to the NrdI family.

Probably involved in ribonucleotide reductase function. This Photorhabdus laumondii subsp. laumondii (strain DSM 15139 / CIP 105565 / TT01) (Photorhabdus luminescens subsp. laumondii) protein is Protein NrdI.